The primary structure comprises 503 residues: Putative cytochrome P450 71A28 (503 aa).

Residues 1-21 traverse the membrane as a helical segment; that stretch reads MILISLCFTTFLAFLFLNPLL. Position 443 (cysteine 443) interacts with heme.

This sequence belongs to the cytochrome P450 family. It depends on heme as a cofactor.

Its subcellular location is the membrane. This chain is Putative cytochrome P450 71A28 (CYP71A28), found in Arabidopsis thaliana (Mouse-ear cress).